We begin with the raw amino-acid sequence, 1872 residues long: Ral GTPase-activating protein subunit alpha-2 (1872 aa).

The interval 350–370 (DGAGSTEQDKSHSNSSTLSDR) is disordered. Residues serine 373, serine 376, and serine 379 each carry the phosphoserine modification. Residues 445-469 (PDKKDVAQEDADKLGLSETDSKEAS) show a composition bias toward basic and acidic residues. The disordered stretch occupies residues 445–481 (PDKKDVAQEDADKLGLSETDSKEASSESSGHKRSSSW). Serine 486 carries the phosphoserine modification. Serine 696 is subject to Phosphoserine; by PKB. Disordered stretches follow at residues 711-730 (FRSA…NTVR) and 758-813 (QQVP…GITM). Threonine 715 is modified (phosphothreonine; by PKB). Polar residues-rich tracts occupy residues 758–768 (QQVPRSSSTSD) and 775–795 (SDSS…SEPK). Over residues 796–810 (SVQESKGHVTHEHEG) the composition is skewed to basic and acidic residues. Phosphoserine occurs at positions 819 and 820. A disordered region spans residues 831-851 (QQAHGRCRQRQTSESTGSDTV). Residues 840–849 (RQTSESTGSD) are compositionally biased toward polar residues. Serine 1592 bears the Phosphoserine mark. The region spanning 1634-1842 (LKNLDSRQCR…EERALYLEAI (209 aa)) is the Rap-GAP domain.

As to quaternary structure, component of the heterodimeric RalGAP2 complex with RALGAPB. Heterodimerization is required for activity. As to expression, abundantly expressed in testis, pancreas, lung, thymus, brown fat, and white fat.

The protein resides in the cytoplasm. Its function is as follows. Catalytic subunit of the heterodimeric RalGAP2 complex which acts as a GTPase activator for the Ras-like small GTPases RALA and RALB. The sequence is that of Ral GTPase-activating protein subunit alpha-2 (Ralgapa2) from Mus musculus (Mouse).